The sequence spans 444 residues: Multidrug resistance protein MdtA (444 aa).

An N-terminal signal peptide occupies residues 1-20 (MKSQSKRTSRLFVFVGVVVA). Positions 37–52 (NNTSGAQQSARGQDTS) are enriched in polar residues. Disordered regions lie at residues 37–60 (NNTS…RNTP) and 398–444 (TPRS…AEKS). A compositionally biased stretch (low complexity) spans 409–419 (ASAEKAAAEAE). The segment covering 435 to 444 (ARSTTAAEKS) has biased composition (polar residues).

It belongs to the membrane fusion protein (MFP) (TC 8.A.1) family. Part of a tripartite efflux system composed of MdtA, MdtB and MdtC.

It is found in the cell inner membrane. The chain is Multidrug resistance protein MdtA from Yersinia pseudotuberculosis serotype O:3 (strain YPIII).